Here is a 190-residue protein sequence, read N- to C-terminus: Holliday junction branch migration complex subunit RuvA (190 aa).

The tract at residues 1-64 (MIGRITGTLI…EDAHILYGFA (64 aa)) is domain I. The segment at 65 to 137 (TAAERGAFRE…MRGKLGADIG (73 aa)) is domain II. A flexible linker region spans residues 137-141 (GATAH). The tract at residues 142-190 (AVPDSQTDILNALLALGYSDKESQAALKKLPEGTGVSEGIRLALKALVR) is domain III.

The protein belongs to the RuvA family. As to quaternary structure, homotetramer. Forms an RuvA(8)-RuvB(12)-Holliday junction (HJ) complex. HJ DNA is sandwiched between 2 RuvA tetramers; dsDNA enters through RuvA and exits via RuvB. An RuvB hexamer assembles on each DNA strand where it exits the tetramer. Each RuvB hexamer is contacted by two RuvA subunits (via domain III) on 2 adjacent RuvB subunits; this complex drives branch migration. In the full resolvosome a probable DNA-RuvA(4)-RuvB(12)-RuvC(2) complex forms which resolves the HJ.

The protein resides in the cytoplasm. Functionally, the RuvA-RuvB-RuvC complex processes Holliday junction (HJ) DNA during genetic recombination and DNA repair, while the RuvA-RuvB complex plays an important role in the rescue of blocked DNA replication forks via replication fork reversal (RFR). RuvA specifically binds to HJ cruciform DNA, conferring on it an open structure. The RuvB hexamer acts as an ATP-dependent pump, pulling dsDNA into and through the RuvAB complex. HJ branch migration allows RuvC to scan DNA until it finds its consensus sequence, where it cleaves and resolves the cruciform DNA. The sequence is that of Holliday junction branch migration complex subunit RuvA from Bordetella petrii (strain ATCC BAA-461 / DSM 12804 / CCUG 43448).